A 469-amino-acid polypeptide reads, in one-letter code: Glutamate--tRNA ligase (469 aa).

Positions 11 to 21 (PSPTGFIHLGN) match the 'HIGH' region motif. The segment covering 118–131 (GEKPRYDGTWRPEP) has biased composition (basic and acidic residues). A disordered region spans residues 118–139 (GEKPRYDGTWRPEPGKVLPEPP). Residues 243-247 (KMSKR) carry the 'KMSKS' region motif. Residue K246 coordinates ATP.

The protein belongs to the class-I aminoacyl-tRNA synthetase family. Glutamate--tRNA ligase type 1 subfamily. As to quaternary structure, monomer.

It is found in the cytoplasm. It catalyses the reaction tRNA(Glu) + L-glutamate + ATP = L-glutamyl-tRNA(Glu) + AMP + diphosphate. Catalyzes the attachment of glutamate to tRNA(Glu) in a two-step reaction: glutamate is first activated by ATP to form Glu-AMP and then transferred to the acceptor end of tRNA(Glu). This is Glutamate--tRNA ligase from Burkholderia pseudomallei (strain 1106a).